The chain runs to 134 residues: Global transcriptional regulator Spx (134 aa).

An intrachain disulfide couples Cys10 to Cys13.

The protein belongs to the ArsC family. Spx subfamily. As to quaternary structure, interacts with the C-terminal domain of the alpha subunit of the RNAP.

It localises to the cytoplasm. Functionally, global transcriptional regulator that plays a key role in stress response and exerts either positive or negative regulation of genes. Acts by interacting with the C-terminal domain of the alpha subunit of the RNA polymerase (RNAP). This interaction can enhance binding of RNAP to the promoter region of target genes and stimulate their transcription, or block interaction of RNAP with activator. The sequence is that of Global transcriptional regulator Spx from Streptococcus pyogenes serotype M3 (strain ATCC BAA-595 / MGAS315).